Consider the following 513-residue polypeptide: Na(+)/H(+) antiporter NhaB (513 aa).

The next 12 helical transmembrane spans lie at 23–43, 52–72, 97–117, 120–140, 144–164, 202–222, 238–258, 303–323, 348–368, 391–411, 447–467, and 475–495; these read LALI…PFVA, IFTL…LLAI, LLLM…LFIF, LLLS…AAAF, FLDA…FYGI, LMMH…VGEP, FFLR…LTCL, AIIG…VGLI, TESL…AVII, LFYI…VGTI, ATPN…APLI, and VWMA…CVEF.

Belongs to the NhaB Na(+)/H(+) (TC 2.A.34) antiporter family.

The protein resides in the cell inner membrane. The enzyme catalyses 2 Na(+)(in) + 3 H(+)(out) = 2 Na(+)(out) + 3 H(+)(in). Its function is as follows. Na(+)/H(+) antiporter that extrudes sodium in exchange for external protons. The sequence is that of Na(+)/H(+) antiporter NhaB from Escherichia coli O6:K15:H31 (strain 536 / UPEC).